The following is a 332-amino-acid chain: Putative peptide import ATP-binding protein BruAb2_1033 (332 aa).

Residues 11 to 261 form the ABC transporter domain; that stretch reads LEVSNLSVDF…PLHPYTEGLL (251 aa). Position 47 to 54 (47 to 54) interacts with ATP; sequence GESGSGKS.

Belongs to the ABC transporter superfamily. The complex is composed of two ATP-binding proteins (BruAb2_1033 and BruAb2_1034), two transmembrane proteins (BruAb2_1031 and BruAb2_1032) and a solute-binding protein (BruAb2_1030).

The protein resides in the cell inner membrane. Functionally, probably part of an ABC transporter complex that could be involved in peptide import. Probably responsible for energy coupling to the transport system. The chain is Putative peptide import ATP-binding protein BruAb2_1033 from Brucella abortus biovar 1 (strain 9-941).